Here is a 115-residue protein sequence, read N- to C-terminus: U3-lycotoxin-Ls1b (115 aa).

Positions 1–20 (MKFVLLFGVLLVTLFSYSSA) are cleaved as a signal peptide. A propeptide spanning residues 21 to 44 (EMLDDFDQADEDELLSLIEKEEAR) is cleaved from the precursor. 4 disulfides stabilise this stretch: Cys48–Cys63, Cys55–Cys72, Cys62–Cys87, and Cys74–Cys85.

The protein belongs to the neurotoxin 19 (CSTX) family. 01 subfamily. As to expression, expressed by the venom gland.

It localises to the secreted. This Lycosa singoriensis (Wolf spider) protein is U3-lycotoxin-Ls1b.